The primary structure comprises 344 residues: Prickle-like protein 4 (344 aa).

In terms of domain architecture, PET spans 1 to 81 (MSPQGPAVLS…ARLVLPKLEG (81 aa)). LIM zinc-binding domains follow at residues 82 to 147 (HTCE…LLRP) and 148 to 207 (RCPA…RYSD). Residues 253–344 (GSSLQTQRGL…NASKTHCTMC (92 aa)) are disordered. Positions 257–271 (QTQRGLPGSSPQQEN) are enriched in polar residues. Positions 272-296 (RPGDKAEAPKGQEQCRLETIRDPKD) are enriched in basic and acidic residues. Polar residues predominate over residues 322 to 344 (SWKTPGSLQAEDSNASKTHCTMC).

It belongs to the prickle / espinas / testin family. As to expression, expressed in a broad range of normal tissues as well as in hepatocellular carcinoma, breast cancer and prostate cancer tissues.

The chain is Prickle-like protein 4 (PRICKLE4) from Homo sapiens (Human).